Reading from the N-terminus, the 449-residue chain is UDP-N-acetylmuramoylalanine--D-glutamate ligase (449 aa).

Residue 111–117 (GTNGKST) participates in ATP binding.

The protein belongs to the MurCDEF family.

The protein localises to the cytoplasm. It catalyses the reaction UDP-N-acetyl-alpha-D-muramoyl-L-alanine + D-glutamate + ATP = UDP-N-acetyl-alpha-D-muramoyl-L-alanyl-D-glutamate + ADP + phosphate + H(+). Its pathway is cell wall biogenesis; peptidoglycan biosynthesis. Functionally, cell wall formation. Catalyzes the addition of glutamate to the nucleotide precursor UDP-N-acetylmuramoyl-L-alanine (UMA). The sequence is that of UDP-N-acetylmuramoylalanine--D-glutamate ligase from Rickettsia felis (strain ATCC VR-1525 / URRWXCal2) (Rickettsia azadi).